The chain runs to 621 residues: Myosin-binding protein C, slow-type (621 aa).

3 Ig-like C2-type domains span residues 1–53, 54–142, and 144–241; these read EEIV…VDLR, PLKI…HVID, and PKII…LWIS. Residue T28 is modified to Phosphothreonine. A Phosphoserine modification is found at S233. 3 consecutive Fibronectin type-III domains span residues 244 to 343, 344 to 459, and 556 to 621; these read LRLA…TSPP, TLLA…IEPP, and PPQA…VIGN. Residue T420 is modified to Phosphothreonine. Y445 carries the post-translational modification Phosphotyrosine. An Ig-like C2-type 4 domain is found at 459–553; that stretch reads PKIRIPRHLK…ASIDIQIVDR (95 aa).

The protein belongs to the immunoglobulin superfamily. MyBP family. In terms of assembly, interacts with USP25 (isoform USP25m only); the interaction prevents proteasomal degradation of MYBPC1.

Its function is as follows. Thick filament-associated protein located in the crossbridge region of vertebrate striated muscle a bands. Slow skeletal protein that binds to both myosin and actin. In vitro, binds to native thin filaments and modifies the activity of actin-activated myosin ATPase. May modulate muscle contraction or may play a more structural role. In Rattus norvegicus (Rat), this protein is Myosin-binding protein C, slow-type (Mybpc1).